The primary structure comprises 83 residues: Short neurotoxin 3FTx-Oxy3 (83 aa).

Positions 1–21 are cleaved as a signal peptide; that stretch reads MKTLLLTLVVVTIVCLDLGYT. Cystine bridges form between cysteine 24–cysteine 45, cysteine 38–cysteine 62, cysteine 64–cysteine 75, and cysteine 76–cysteine 81.

This sequence belongs to the three-finger toxin family. Short-chain subfamily. Type I alpha-neurotoxin sub-subfamily. As to expression, expressed by the venom gland.

It is found in the secreted. In terms of biological role, binds to muscle nicotinic acetylcholine receptor (nAChR) and inhibit acetylcholine from binding to the receptor, thereby impairing neuromuscular transmission. The polypeptide is Short neurotoxin 3FTx-Oxy3 (Oxyuranus microlepidotus (Inland taipan)).